The following is a 605-amino-acid chain: Isocitrate dehydrogenase kinase/phosphatase (605 aa).

Residues 327 to 333 and Lys-348 each bind ATP; that span reads APGIKGL. Asp-383 is an active-site residue.

Belongs to the AceK family.

It localises to the cytoplasm. It catalyses the reaction L-seryl-[isocitrate dehydrogenase] + ATP = O-phospho-L-seryl-[isocitrate dehydrogenase] + ADP + H(+). Functionally, bifunctional enzyme which can phosphorylate or dephosphorylate isocitrate dehydrogenase (IDH) on a specific serine residue. This is a regulatory mechanism which enables bacteria to bypass the Krebs cycle via the glyoxylate shunt in response to the source of carbon. When bacteria are grown on glucose, IDH is fully active and unphosphorylated, but when grown on acetate or ethanol, the activity of IDH declines drastically concomitant with its phosphorylation. The chain is Isocitrate dehydrogenase kinase/phosphatase from Burkholderia lata (strain ATCC 17760 / DSM 23089 / LMG 22485 / NCIMB 9086 / R18194 / 383).